The chain runs to 140 residues: Large ribosomal subunit protein uL16 (140 aa).

The protein belongs to the universal ribosomal protein uL16 family. In terms of assembly, part of the 50S ribosomal subunit.

In terms of biological role, binds 23S rRNA and is also seen to make contacts with the A and possibly P site tRNAs. This chain is Large ribosomal subunit protein uL16, found in Trichlorobacter lovleyi (strain ATCC BAA-1151 / DSM 17278 / SZ) (Geobacter lovleyi).